We begin with the raw amino-acid sequence, 388 residues long: Succinate--CoA ligase [ADP-forming] subunit beta (388 aa).

One can recognise an ATP-grasp domain in the interval lysine 9 to histidine 244. ATP is bound by residues lysine 46, glycine 53–glycine 55, glutamate 99, serine 102, and glutamate 107. Positions 199 and 213 each coordinate Mg(2+). Substrate is bound by residues asparagine 264 and glycine 321–valine 323.

Belongs to the succinate/malate CoA ligase beta subunit family. Heterotetramer of two alpha and two beta subunits. Requires Mg(2+) as cofactor.

The enzyme catalyses succinate + ATP + CoA = succinyl-CoA + ADP + phosphate. It carries out the reaction GTP + succinate + CoA = succinyl-CoA + GDP + phosphate. It functions in the pathway carbohydrate metabolism; tricarboxylic acid cycle; succinate from succinyl-CoA (ligase route): step 1/1. Succinyl-CoA synthetase functions in the citric acid cycle (TCA), coupling the hydrolysis of succinyl-CoA to the synthesis of either ATP or GTP and thus represents the only step of substrate-level phosphorylation in the TCA. The beta subunit provides nucleotide specificity of the enzyme and binds the substrate succinate, while the binding sites for coenzyme A and phosphate are found in the alpha subunit. This is Succinate--CoA ligase [ADP-forming] subunit beta from Aliivibrio salmonicida (strain LFI1238) (Vibrio salmonicida (strain LFI1238)).